Consider the following 439-residue polypeptide: MRRAALRLCALGKGQLTPGRGLTQGPQNPKKQGIFHIHEVRDKLREIVGASTNWRDHVKAMEERKLLHSFLAKSQDGLPPRRMKDSYIEVLLPLGSEPELREKYLTVQNTVRFGRILEDLDSLGVLICYMHNKIHSAKMSPLSIVTALVDKIDMCKKSLSPEQDIKFSGHVSWVGKTSMEVKMQMFQLHGDEFCPVLDATFVMVARDSENKGPAFVNPLIPESPEEEELFRQGELNKGRRIAFSSTSLLKMAPSAEERTTIHEMFLSTLDPKTISFRSRVLPSNAVWMENSKLKSLEICHPQERNIFNRIFGGFLMRKAYELAWATACSFGGSRPFVVAVDDIMFQKPVEVGSLLFLSSQVCFTQNNYIQVRVHSEVASLQEKQHTTTNVFHFTFMSEKEVPLVFPKTYGESMLYLDGQRHFNSMSGPATLRKDYLVEP.

Residues 1–21 (MRRAALRLCALGKGQLTPGRG) constitute a mitochondrion transit peptide. 2 consecutive HotDog ACOT-type domains span residues 84 to 209 (KDSY…RDSE) and 289 to 401 (ENSK…EKEV). An N6-acetyllysine modification is found at Lys-103.

Belongs to the acyl coenzyme A hydrolase family. In terms of assembly, interacts with NYAP1, NYAP2 and MYO16.

The protein localises to the mitochondrion. It is found in the mitochondrion matrix. The protein resides in the mitochondrion inner membrane. It carries out the reaction butanoyl-CoA + H2O = butanoate + CoA + H(+). The catalysed reaction is propanoyl-CoA + H2O = propanoate + CoA + H(+). The enzyme catalyses hexadecanoyl-CoA + H2O = hexadecanoate + CoA + H(+). It catalyses the reaction octanoyl-CoA + H2O = octanoate + CoA + H(+). It carries out the reaction decanoyl-CoA + H2O = decanoate + CoA + H(+). The catalysed reaction is tetradecanoyl-CoA + H2O = tetradecanoate + CoA + H(+). The enzyme catalyses 4,8-dimethylnonanoyl-CoA + H2O = 4,8-dimethylnonanoate + CoA + H(+). It catalyses the reaction 3-methylbutanoyl-CoA + H2O = 3-methylbutanoate + CoA + H(+). It carries out the reaction 2-methylpropanoyl-CoA + H2O = 2-methylpropanoate + CoA + H(+). It functions in the pathway lipid metabolism; fatty acid metabolism. With respect to regulation, strongly inhibited by NADH and CoA. Functionally, mitochondrial acyl-CoA thioesterase. Catalyzes the hydrolysis of acyl-CoAs into free fatty acids and coenzyme A (CoA), regulating their respective intracellular levels. Regulates both mitochondrial lipid and amino acid metabolism. The sequence is that of Acyl-coenzyme A thioesterase 9, mitochondrial from Homo sapiens (Human).